Reading from the N-terminus, the 612-residue chain is Actin-binding LIM protein 2 (612 aa).

4 LIM zinc-binding domains span residues 22 to 81 (ILCN…LYGT), 81 to 141 (TRCF…TLVG), 151 to 210 (RSCG…KFGI), and 210 to 270 (IRCD…ARTE). Positions 83, 86, 103, 106, 109, 112, 131, and 134 each coordinate Zn(2+). Residues C212, C215, H232, C235, C238, C241, H260, and C263 each contribute to the Zn(2+) site. Over residues 269 to 278 (TEDKSKETRT) the composition is skewed to basic and acidic residues. Disordered stretches follow at residues 269 to 295 (TEDK…SGSP) and 341 to 433 (AVGD…DNIY). Composition is skewed to low complexity over residues 279-295 (SSES…SGSP) and 364-373 (SSPSSAGSVS). 4 positions are modified to phosphoserine: S282, S294, S365, and S368. The segment covering 394-416 (SGRSTPSLSVHSDSRPPSSTYQQ) has biased composition (polar residues). S453 is modified (phosphoserine). The tract at residues 471-520 (ADTRTNSPDLDSQSLSLSSGADQEPLQRMPGDSLYSRFPYSKPDTLPGPR) is disordered. T473 is subject to Phosphothreonine. A phosphoserine mark is found at S477 and S579. Low complexity predominate over residues 477–489 (SPDLDSQSLSLSS). In terms of domain architecture, HP spans 544-612 (TREYKIYPYD…NDLKKKALLF (69 aa)).

Interacts with F-actin and ABRA.

It is found in the cytoplasm. May act as scaffold protein. May stimulate ABRA activity and ABRA-dependent SRF transcriptional activity. This chain is Actin-binding LIM protein 2 (Ablim2), found in Rattus norvegicus (Rat).